The following is a 66-amino-acid chain: Large ribosomal subunit protein bL33c (66 aa).

Belongs to the bacterial ribosomal protein bL33 family.

Its subcellular location is the plastid. The protein resides in the chloroplast. The polypeptide is Large ribosomal subunit protein bL33c (Drimys granadensis).